The chain runs to 172 residues: Translationally-controlled tumor protein homolog (172 aa).

The TCTP domain maps to 1 to 172 (MIIYRDCISQ…FKDGLEMEKC (172 aa)).

The protein belongs to the TCTP family. As to expression, expressed by the venom gland.

The protein resides in the secreted. Functionally, venom protein that causes edema, enhances vascular permeability and is likely related to the inflammatory activity of the venom. In Crotalus adamanteus (Eastern diamondback rattlesnake), this protein is Translationally-controlled tumor protein homolog.